A 186-amino-acid chain; its full sequence is Mitochondrial import inner membrane translocase subunit Tim22 (186 aa).

Intrachain disulfides connect C61–C133 and C152–C171. 3 consecutive transmembrane segments (helical) span residues 66–86 (ALAC…TAGI), 117–135 (YAKN…ECLV), and 162–182 (AGLK…AVID).

It belongs to the Tim17/Tim22/Tim23 family. As to quaternary structure, core component of the TIM22 complex.

The protein localises to the mitochondrion inner membrane. Essential core component of the TIM22 complex, a complex that mediates the import and insertion of multi-pass transmembrane proteins into the mitochondrial inner membrane. In the TIM22 complex, it constitutes the voltage-activated and signal-gated channel. Forms a twin-pore translocase that uses the membrane potential as external driving force in 2 voltage-dependent steps. This is Mitochondrial import inner membrane translocase subunit Tim22 (timm22) from Xenopus tropicalis (Western clawed frog).